Consider the following 198-residue polypeptide: Shikimate kinase (198 aa).

26-31 (GSGKSQ) is a binding site for ATP. Residue S30 coordinates Mg(2+). D48, R72, and G94 together coordinate substrate. Position 132 (R132) interacts with ATP. Residue R151 coordinates substrate. Q167 contacts ATP.

The protein belongs to the shikimate kinase family. In terms of assembly, monomer. Mg(2+) serves as cofactor.

The protein resides in the cytoplasm. It carries out the reaction shikimate + ATP = 3-phosphoshikimate + ADP + H(+). The protein operates within metabolic intermediate biosynthesis; chorismate biosynthesis; chorismate from D-erythrose 4-phosphate and phosphoenolpyruvate: step 5/7. In terms of biological role, catalyzes the specific phosphorylation of the 3-hydroxyl group of shikimic acid using ATP as a cosubstrate. The protein is Shikimate kinase of Prochlorococcus marinus (strain NATL2A).